Reading from the N-terminus, the 475-residue chain is Aspartyl/glutamyl-tRNA(Asn/Gln) amidotransferase subunit B (475 aa).

Belongs to the GatB/GatE family. GatB subfamily. Heterotrimer of A, B and C subunits.

The enzyme catalyses L-glutamyl-tRNA(Gln) + L-glutamine + ATP + H2O = L-glutaminyl-tRNA(Gln) + L-glutamate + ADP + phosphate + H(+). It carries out the reaction L-aspartyl-tRNA(Asn) + L-glutamine + ATP + H2O = L-asparaginyl-tRNA(Asn) + L-glutamate + ADP + phosphate + 2 H(+). In terms of biological role, allows the formation of correctly charged Asn-tRNA(Asn) or Gln-tRNA(Gln) through the transamidation of misacylated Asp-tRNA(Asn) or Glu-tRNA(Gln) in organisms which lack either or both of asparaginyl-tRNA or glutaminyl-tRNA synthetases. The reaction takes place in the presence of glutamine and ATP through an activated phospho-Asp-tRNA(Asn) or phospho-Glu-tRNA(Gln). This is Aspartyl/glutamyl-tRNA(Asn/Gln) amidotransferase subunit B from Macrococcus caseolyticus (strain JCSC5402) (Macrococcoides caseolyticum).